A 389-amino-acid polypeptide reads, in one-letter code: tRNA-specific 2-thiouridylase MnmA (389 aa).

ATP-binding positions include 30 to 37 and L56; that span reads GLSGGVDS. The Nucleophile role is filled by C117. Cysteines 117 and 216 form a disulfide. G142 contributes to the ATP binding site. Positions 166-168 are interaction with tRNA; that stretch reads KDQ. The active-site Cysteine persulfide intermediate is the C216. Residues 321 to 322 form an interaction with tRNA region; the sequence is RY.

This sequence belongs to the MnmA/TRMU family.

It is found in the cytoplasm. The catalysed reaction is S-sulfanyl-L-cysteinyl-[protein] + uridine(34) in tRNA + AH2 + ATP = 2-thiouridine(34) in tRNA + L-cysteinyl-[protein] + A + AMP + diphosphate + H(+). Its function is as follows. Catalyzes the 2-thiolation of uridine at the wobble position (U34) of tRNA, leading to the formation of s(2)U34. The protein is tRNA-specific 2-thiouridylase MnmA of Synechococcus sp. (strain CC9902).